The sequence spans 138 residues: DASH complex subunit DAD2 (138 aa).

Over residues 1–14 (MSGFSSRPLSTHLR) the composition is skewed to polar residues. Disordered stretches follow at residues 1 to 25 (MSGF…QGQS) and 116 to 138 (PTEH…SGRG).

Belongs to the DASH complex DAD2 family. In terms of assembly, component of the DASH complex consisting of ASK1, DAD1, DAD2, DAD3, DAD4, DAM1, DUO1, HSK3, SPC19 and SPC34, with a stoichiometry of one copy of each subunit per complex. Multiple DASH complexes oligomerize to form a ring that encircles spindle microtubules and organizes the rod-like NDC80 complexes of the outer kinetochore. DASH complex oligomerization strengthens microtubule attachments. On cytoplasmic microtubules, DASH complexes appear to form patches instead of rings.

It localises to the chromosome. It is found in the centromere. Its subcellular location is the kinetochore. The protein localises to the cytoplasm. The protein resides in the cytoskeleton. It localises to the spindle. It is found in the nucleus. In terms of biological role, component of the DASH complex that connects microtubules with kinetochores and couples microtubule depolymerisation to chromosome movement; it is involved in retrieving kinetochores to the spindle poles before their re-orientation on the spindle in early mitosis and allows microtubule depolymerization to pull chromosomes apart and resist detachment during anaphase. Kinetochores, consisting of a centromere-associated inner segment and a microtubule-contacting outer segment, play a crucial role in chromosome segregation by mediating the physical connection between centromeric DNA and microtubules. Kinetochores also serve as an input point for the spindle assembly checkpoint, which delays anaphase until all chromosomes have bioriented on the mitotic spindle. This chain is DASH complex subunit DAD2, found in Chaetomium thermophilum (strain DSM 1495 / CBS 144.50 / IMI 039719) (Thermochaetoides thermophila).